We begin with the raw amino-acid sequence, 1029 residues long: Beta-galactosidase 2 (1029 aa).

Positions 104 and 203 each coordinate substrate. A Na(+)-binding site is contributed by Asp203. Residues Glu418, His420, and Glu463 each coordinate Mg(2+). Residues Glu463 and 539–542 (EYAH) contribute to the substrate site. The active-site Proton donor is Glu463. The active-site Nucleophile is the Glu539. Residue Asn599 coordinates Mg(2+). Phe603 and Asn606 together coordinate Na(+). The substrate site is built by Asn606 and Trp1004.

This sequence belongs to the glycosyl hydrolase 2 family. As to quaternary structure, homotetramer. It depends on Mg(2+) as a cofactor. The cofactor is Na(+).

The enzyme catalyses Hydrolysis of terminal non-reducing beta-D-galactose residues in beta-D-galactosides.. This chain is Beta-galactosidase 2, found in Enterobacter cloacae.